A 510-amino-acid polypeptide reads, in one-letter code: MILVLASLFAVLILNVLLWRWLKASACKAQRLPPGPPRLPILGNLLQLGPLPHRDLASLCDKYGPLVYLRLGNVDAITTNDPDTIREILLRQDDVFSSRPKTLAAVHLAYGCGDVALAPMGPHWKRMRRICMEHLLTTKRLESFTTQRAEEARYLIRDVFKRSETGKPINLKEVLGAFSMNNVTRMLLGKQFFGPGSLVSPKEAQEFLHITHKLFWLLGVIYLGDYLPFWRWVDPSGCEKEMRDVEKRVDEFHTKIIDEHRRAKLEDEDKNGDMDFVDVLLSLPGENGKAHMEDVEIKALIQDMIAAATDTSAVTNEWAMAEAIKQPRVMRKIQEELDNVVGSNRMVDESDLVHLNYLRCVVRETFRMHPAGPFLIPHESVRATTINGYYIPAKTRVFINTHGLGRNTKIWDDVEDFRPERHWPVEGSGRVEISHGPDFKILPFSAGKRKCPGAPLGVTMVLMALARLFHCFEWSSPGNIDTVEVYGMTMPKAKPLRAIAKPRLAAHLYT.

Residues 2-22 (ILVLASLFAVLILNVLLWRWL) form a helical membrane-spanning segment. Cysteine 451 provides a ligand contact to heme.

The protein belongs to the cytochrome P450 family. The cofactor is heme.

Its subcellular location is the membrane. The enzyme catalyses dodecanoate + reduced [NADPH--hemoprotein reductase] + O2 = 7-hydroxydodecanoate + oxidized [NADPH--hemoprotein reductase] + H2O + H(+). Involved in pollen wall development. Catalyzes the conversion of medium-chain saturated fatty acids to the corresponding monohydroxylated fatty acids, with a preferential hydroxylation of lauric acid at the C-7 position. In-chain hydroxylated fatty acids, together with omega-hydroxylated fatty acids, are key monomeric aliphatic building blocks for sporopollenin synthesis during exine formation. The protein is Cytochrome P450 703A2 of Arabidopsis thaliana (Mouse-ear cress).